Consider the following 177-residue polypeptide: Adenylyl-sulfate kinase (177 aa).

Residue 12–19 (GLSGAGKT) participates in ATP binding. The active-site Phosphoserine intermediate is the S86.

Belongs to the APS kinase family.

The enzyme catalyses adenosine 5'-phosphosulfate + ATP = 3'-phosphoadenylyl sulfate + ADP + H(+). It functions in the pathway sulfur metabolism; hydrogen sulfide biosynthesis; sulfite from sulfate: step 2/3. In terms of biological role, catalyzes the synthesis of activated sulfate. The chain is Adenylyl-sulfate kinase from Picosynechococcus sp. (strain ATCC 27264 / PCC 7002 / PR-6) (Agmenellum quadruplicatum).